The primary structure comprises 375 residues: MSLMVVSMACVGFFLLQGAWTHEGGQDKPLLSAWPSAVVPRGGHVTLLCRSRLGFTIFSLYKEDGVPVPELYNKIFWKSILMGPVTPAHAGTYRCRGSHPRSPIEWSAPSNPLVIVVTGLFGKPSLSAQPGPTVRTGENVTLSCSSRSSFDMYHLSREGRAHEPRLPAVPSVDGTFQADFPLGPATHGGTYTCFSSLHDSPYEWSDPSDPLLVSVTGNSSSSSSSPTEPSSKTGIRRHLHILIGTSVAIILFIILFFFLLHCCCSNKKNAAVMDQEPAGDRTVNREDSDDQDPQEVTYAQLDHCVFTQTKITSPSQRPKTPPTDTTMYMELPNAKPRSLSPAHKHHSQALRGSSRETTALSQNRVASSHVPAAGI.

The N-terminal stretch at 1–21 is a signal peptide; the sequence is MSLMVVSMACVGFFLLQGAWT. Residues 22-238 are Extracellular-facing; sequence HEGGQDKPLL…PSSKTGIRRH (217 aa). 2 consecutive Ig-like C2-type domains span residues 42–102 and 137–200; these read GGHV…HPRS and GENV…LHDS. 2 cysteine pairs are disulfide-bonded: Cys49–Cys95 and Cys144–Cys193. Residues 213–233 are disordered; sequence VSVTGNSSSSSSSPTEPSSKT. Asn218 is a glycosylation site (N-linked (GlcNAc...) asparagine). The segment covering 219-231 has biased composition (low complexity); the sequence is SSSSSSSPTEPSS. A helical transmembrane segment spans residues 239–259; the sequence is LHILIGTSVAIILFIILFFFL. The Cytoplasmic portion of the chain corresponds to 260–375; that stretch reads LHCCCSNKKN…ASSHVPAAGI (116 aa). The tract at residues 334 to 375 is disordered; sequence AKPRSLSPAHKHHSQALRGSSRETTALSQNRVASSHVPAAGI. Over residues 355-366 the composition is skewed to polar residues; that stretch reads RETTALSQNRVA.

It belongs to the immunoglobulin superfamily.

The protein localises to the cell membrane. Functionally, receptor on natural killer (NK) cells for HLA-C alleles. Inhibits the activity of NK cells thus preventing cell lysis. The polypeptide is Killer cell immunoglobulin-like receptor 2DL5B (KIR2DL5B) (Homo sapiens (Human)).